A 286-amino-acid polypeptide reads, in one-letter code: Nucleotide-binding protein VC_2532 (286 aa).

Glycine 8 to serine 15 contacts ATP. Aspartate 56–asparagine 59 contacts GTP.

Belongs to the RapZ-like family.

Displays ATPase and GTPase activities. The sequence is that of Nucleotide-binding protein VC_2532 from Vibrio cholerae serotype O1 (strain ATCC 39315 / El Tor Inaba N16961).